A 1025-amino-acid polypeptide reads, in one-letter code: Putative receptor-like protein kinase At3g47110 (1025 aa).

The signal sequence occupies residues 1–30 (MGVPCIVMRLILVSALLVSVSLEHSDMVCA). At 31–653 (QTIRLTEETD…LPRRHSSVRK (623 aa)) the chain is on the extracellular side. Residues Asn-63 and Asn-103 are each glycosylated (N-linked (GlcNAc...) asparagine). LRR repeat units follow at residues 104–128 (LSFLRSLNLADNFFHGAIPSEVGNL), 130–151 (RLQYLNMSNNLFGGVIPVVLSN), 152–175 (CSSLSTLDLSSNHLEQGVPLEFGS), 176–200 (LSKLVLLSLGRNNLTGKFPASLGNL), 202–224 (SLQMLDFIYNQIEGEIPGDIARL), 226–248 (QMIFFRIALNKFNGVFPPPIYNL), 249–271 (SSLIFLSITGNSFSGTLRPDFGS), 273–297 (LPNLQILYMGINSFTGTIPETLSNI), 298–323 (SSLRQLDIPSNHLTGKIPLSFGRLQN), and 325–344 (LLLGLNNNSLGNYSSGDLDF). N-linked (GlcNAc...) asparagine glycans are attached at residues Asn-135 and Asn-151. N-linked (GlcNAc...) asparagine glycosylation is found at Asn-188 and Asn-199. The N-linked (GlcNAc...) asparagine glycan is linked to Asn-247. N-linked (GlcNAc...) asparagine glycosylation is present at Asn-296. Asn-331, Asn-336, Asn-350, and Asn-374 each carry an N-linked (GlcNAc...) asparagine glycan. LRR repeat units follow at residues 351 to 374 (CSQLQYLNVGFNKLGGQLPVFIAN), 376 to 400 (STQLTELSLGGNLISGSIPHGIGNL), 401 to 424 (VSLQTLDLGENLLTGKLPPSLGEL), 426 to 448 (ELRKVLLYSNGLSGEIPSSLGNI), 449 to 472 (SGLTYLYLLNNSFEGSIPSSLGSC), 473 to 496 (SYLLDLNLGTNKLNGSIPHELMEL), 498 to 520 (SLVVLNVSFNLLVGPLRQDIGKL), 521 to 544 (KFLLALDVSYNKLSGQIPQTLANC), 546 to 567 (SLEFLLLQGNSFVGPIPDIRGL), 568 to 593 (TGLRFLDLSKNNLSGTIPEYMANFSK), and 595 to 616 (QNLNLSLNNFDGAVPTEGVFRN). Residues Asn-447, Asn-458, Asn-486, and Asn-503 are each glycosylated (N-linked (GlcNAc...) asparagine). 4 N-linked (GlcNAc...) asparagine glycosylation sites follow: Asn-579, Asn-590, Asn-598, and Asn-616. A helical transmembrane segment spans residues 654–674 (IITICVSAVMAALLLLCLCVV). The Cytoplasmic portion of the chain corresponds to 675 to 1025 (YLCWYKLRVK…RESFFRDEET (351 aa)). Thr-716 carries the phosphothreonine modification. The Protein kinase domain occupies 719–1020 (FSSSNLIGSG…KLVSIRESFF (302 aa)). Residues 725–733 (IGSGNFGAV) and Lys-748 each bind ATP. Phosphotyrosine occurs at positions 798 and 843. The Proton acceptor role is filled by Asp-856. Tyr-904 is modified (phosphotyrosine).

Belongs to the protein kinase superfamily. Ser/Thr protein kinase family.

The protein resides in the cell membrane. The enzyme catalyses L-seryl-[protein] + ATP = O-phospho-L-seryl-[protein] + ADP + H(+). It catalyses the reaction L-threonyl-[protein] + ATP = O-phospho-L-threonyl-[protein] + ADP + H(+). The chain is Putative receptor-like protein kinase At3g47110 from Arabidopsis thaliana (Mouse-ear cress).